A 558-amino-acid polypeptide reads, in one-letter code: Glypican-1 (558 aa).

Positions 1 to 23 (MELRARGWWLLCAAAALVACTRG) are cleaved as a signal peptide. Intrachain disulfides connect C32–C68, C62–C256, C69–C259, C191–C343, C246–C279, C268–C415, and C272–C401. N-linked (GlcNAc...) asparagine glycosylation is found at N79 and N116. The segment at 478 to 531 (FQDASDDGSGSGSGGGCPDDACGRRVSKKSSSSRTPLIHALPGLSEQEGQKTSA) is disordered. O-linked (Xyl...) (heparan sulfate) serine glycans are attached at residues S486, S488, and S490. The GPI-anchor amidated serine moiety is linked to residue S530. Residues 531–558 (AATRPEPHYFFLLFLFTLVLAAARPRWR) constitute a propeptide, removed in mature form.

The protein belongs to the glypican family. In terms of processing, S-nitrosylated in a Cu(2+)-dependent manner. Nitric acid (NO) is released from the nitrosylated cysteines by ascorbate or by some other reducing agent, in a Cu(2+) or Zn(2+) dependent manner. This free nitric oxide is then capable of cleaving the heparan sulfate side chains. N- and O-glycosylated. N-glycosylation is mainly of the complex type containing sialic acid. O-glycosylated with heparan sulfate. The heparan sulfate chains can be cleaved either by the action of heparanase or, degraded by a deaminative process that uses nitric oxide (NO) released from the S-nitrosylated cysteines. This process is triggered by ascorbate, or by some other reducing agent, in a Cu(2+)- or Zn(2+) dependent manner. Cu(2+) ions are provided by ceruloproteins such as APP, PRNP or CP which associate with GCP1 in intracellular compartments or lipid rafts. Post-translationally, this cell-associated glypican is further processed to give rise to a medium-released species. As to expression, nervous system.

Its subcellular location is the cell membrane. It is found in the endosome. The protein resides in the secreted. The protein localises to the extracellular space. Cell surface proteoglycan that bears heparan sulfate. May act as a catalyst in increasing the rate of conversion of prion protein PRPN(C) to PRNP(Sc) via associating (via the heparan sulfate side chains) with both forms of PRPN, targeting them to lipid rafts and facilitating their interaction. Required for proper skeletal muscle differentiation by sequestering FGF2 in lipid rafts preventing its binding to receptors (FGFRs) and inhibiting the FGF-mediated signaling. Binds Cu(2+) or Zn(2+) ions. Binds, via the heparan sulfate side chains, alpha-4 (V) collagen and participates in Schwann cell myelination. The sequence is that of Glypican-1 (Gpc1) from Rattus norvegicus (Rat).